A 366-amino-acid chain; its full sequence is Putative F-box protein At1g26515 (366 aa).

Positions 1–20 (MKTRSKKTKTENNQEKSKEK) are disordered. Residues 8–20 (TKTENNQEKSKEK) show a composition bias toward basic and acidic residues. Residues 20 to 66 (KNKFDQLPLDLEIEIFRRLPLKSVARFLTLSKSCAATIRSPSFITSF) enclose the F-box domain.

This chain is Putative F-box protein At1g26515, found in Arabidopsis thaliana (Mouse-ear cress).